A 565-amino-acid polypeptide reads, in one-letter code: Sulfite reductase [NADPH] hemoprotein beta-component (565 aa).

[4Fe-4S] cluster-binding residues include cysteine 429, cysteine 435, cysteine 474, and cysteine 478. Cysteine 478 contributes to the siroheme binding site.

This sequence belongs to the nitrite and sulfite reductase 4Fe-4S domain family. Alpha(8)-beta(8). The alpha component is a flavoprotein, the beta component is a hemoprotein. Siroheme is required as a cofactor. Requires [4Fe-4S] cluster as cofactor.

It carries out the reaction hydrogen sulfide + 3 NADP(+) + 3 H2O = sulfite + 3 NADPH + 4 H(+). Its pathway is sulfur metabolism; hydrogen sulfide biosynthesis; hydrogen sulfide from sulfite (NADPH route): step 1/1. Component of the sulfite reductase complex that catalyzes the 6-electron reduction of sulfite to sulfide. This is one of several activities required for the biosynthesis of L-cysteine from sulfate. This Shewanella sp. (strain MR-7) protein is Sulfite reductase [NADPH] hemoprotein beta-component.